Reading from the N-terminus, the 90-residue chain is Glycine and tyrosine-rich protein (90 aa).

The N-terminal stretch at 1-21 (MRRSVLVVFLVLAVTNVAVEA) is a signal peptide.

Prismatic layer of shell (at protein level).

It is found in the secreted. This Pinctada maxima (Silver-lipped pearl oyster) protein is Glycine and tyrosine-rich protein.